Here is a 568-residue protein sequence, read N- to C-terminus: Proline--tRNA ligase (568 aa).

The protein belongs to the class-II aminoacyl-tRNA synthetase family. ProS type 1 subfamily. In terms of assembly, homodimer.

The protein localises to the cytoplasm. It catalyses the reaction tRNA(Pro) + L-proline + ATP = L-prolyl-tRNA(Pro) + AMP + diphosphate. In terms of biological role, catalyzes the attachment of proline to tRNA(Pro) in a two-step reaction: proline is first activated by ATP to form Pro-AMP and then transferred to the acceptor end of tRNA(Pro). As ProRS can inadvertently accommodate and process non-cognate amino acids such as alanine and cysteine, to avoid such errors it has two additional distinct editing activities against alanine. One activity is designated as 'pretransfer' editing and involves the tRNA(Pro)-independent hydrolysis of activated Ala-AMP. The other activity is designated 'posttransfer' editing and involves deacylation of mischarged Ala-tRNA(Pro). The misacylated Cys-tRNA(Pro) is not edited by ProRS. This Chromobacterium violaceum (strain ATCC 12472 / DSM 30191 / JCM 1249 / CCUG 213 / NBRC 12614 / NCIMB 9131 / NCTC 9757 / MK) protein is Proline--tRNA ligase.